The sequence spans 308 residues: Ribonuclease Z (308 aa).

Zn(2+) is bound by residues histidine 61, histidine 63, aspartate 65, histidine 66, histidine 142, aspartate 211, and histidine 270. The active-site Proton acceptor is aspartate 65.

Belongs to the RNase Z family. Homodimer. Zn(2+) is required as a cofactor.

The catalysed reaction is Endonucleolytic cleavage of RNA, removing extra 3' nucleotides from tRNA precursor, generating 3' termini of tRNAs. A 3'-hydroxy group is left at the tRNA terminus and a 5'-phosphoryl group is left at the trailer molecule.. Zinc phosphodiesterase, which displays some tRNA 3'-processing endonuclease activity. Probably involved in tRNA maturation, by removing a 3'-trailer from precursor tRNA. The protein is Ribonuclease Z of Clostridium beijerinckii (strain ATCC 51743 / NCIMB 8052) (Clostridium acetobutylicum).